The following is a 472-amino-acid chain: L-fuculokinase (472 aa).

The protein belongs to the FGGY kinase family. Requires a divalent metal cation as cofactor.

The enzyme catalyses L-fuculose + ATP = L-fuculose 1-phosphate + ADP + H(+). It functions in the pathway carbohydrate degradation; L-fucose degradation; L-lactaldehyde and glycerone phosphate from L-fucose: step 2/3. Catalyzes the phosphorylation of L-fuculose. The polypeptide is L-fuculokinase (Escherichia coli O157:H7).